A 455-amino-acid chain; its full sequence is Bifunctional protein GlmU (455 aa).

Positions 1–226 (MSLDIVILAA…AMEVQGANDR (226 aa)) are pyrophosphorylase. Residues 8-11 (LAAG), Lys-22, Gln-73, 78-79 (GT), 99-101 (YGD), Gly-136, Glu-151, Asn-166, and Asn-224 each bind UDP-N-acetyl-alpha-D-glucosamine. Asp-101 contacts Mg(2+). Residue Asn-224 coordinates Mg(2+). Positions 227-247 (RQLSELERHYQLREGRRLMAQ) are linker. Positions 248–455 (GVTLRDPARF…WKRPEKIKKS (208 aa)) are N-acetyltransferase. Residues Arg-330 and Lys-348 each coordinate UDP-N-acetyl-alpha-D-glucosamine. His-360 (proton acceptor) is an active-site residue. 2 residues coordinate UDP-N-acetyl-alpha-D-glucosamine: Tyr-363 and Asn-374. Acetyl-CoA is bound by residues Ala-377, 383-384 (NY), Ser-402, Ala-420, and Arg-437.

It in the N-terminal section; belongs to the N-acetylglucosamine-1-phosphate uridyltransferase family. In the C-terminal section; belongs to the transferase hexapeptide repeat family. As to quaternary structure, homotrimer. Requires Mg(2+) as cofactor.

The protein localises to the cytoplasm. The enzyme catalyses alpha-D-glucosamine 1-phosphate + acetyl-CoA = N-acetyl-alpha-D-glucosamine 1-phosphate + CoA + H(+). It catalyses the reaction N-acetyl-alpha-D-glucosamine 1-phosphate + UTP + H(+) = UDP-N-acetyl-alpha-D-glucosamine + diphosphate. It participates in nucleotide-sugar biosynthesis; UDP-N-acetyl-alpha-D-glucosamine biosynthesis; N-acetyl-alpha-D-glucosamine 1-phosphate from alpha-D-glucosamine 6-phosphate (route II): step 2/2. Its pathway is nucleotide-sugar biosynthesis; UDP-N-acetyl-alpha-D-glucosamine biosynthesis; UDP-N-acetyl-alpha-D-glucosamine from N-acetyl-alpha-D-glucosamine 1-phosphate: step 1/1. It functions in the pathway bacterial outer membrane biogenesis; LPS lipid A biosynthesis. Catalyzes the last two sequential reactions in the de novo biosynthetic pathway for UDP-N-acetylglucosamine (UDP-GlcNAc). The C-terminal domain catalyzes the transfer of acetyl group from acetyl coenzyme A to glucosamine-1-phosphate (GlcN-1-P) to produce N-acetylglucosamine-1-phosphate (GlcNAc-1-P), which is converted into UDP-GlcNAc by the transfer of uridine 5-monophosphate (from uridine 5-triphosphate), a reaction catalyzed by the N-terminal domain. This Pseudomonas putida (strain ATCC 47054 / DSM 6125 / CFBP 8728 / NCIMB 11950 / KT2440) protein is Bifunctional protein GlmU.